The primary structure comprises 403 residues: MTDSEPQTLNNNSEITANHNDDILEYLSVDDYDYELPDQLIARYPLAQRSASKLLYLPTNNANSQVEDKLFSELPDILNAGDLIVFNDTKVMKARLFGQKDTGGKIEVLIERLVSLSDVNSAYLDEIIANSKTIDTTIIAEKHIALCHIKASKALKLGQGLVLADGHMTGIMIGRQENLFILAFDTPILPDLEQYGELPIPPYFERHADATDNTRYQTVFHDPAKLASVAAPTASLHFDDIVLEKLAAKGIQTAFVTLHVGAGTFAPVKTDNLLNHTMHSEYAHLPQATAELINQTHANGKQVIAIGTTVTRVLETAYQQTAVDGQSLSGWSGDTDIFIYPGFKFGVVDKLLTNFHLPKSTLLMLVSAFATKKSIEQAYQHAIKSQYRFFSYGDAMLLDKQVD.

It belongs to the QueA family. As to quaternary structure, monomer.

The protein localises to the cytoplasm. The enzyme catalyses 7-aminomethyl-7-carbaguanosine(34) in tRNA + S-adenosyl-L-methionine = epoxyqueuosine(34) in tRNA + adenine + L-methionine + 2 H(+). It participates in tRNA modification; tRNA-queuosine biosynthesis. Its function is as follows. Transfers and isomerizes the ribose moiety from AdoMet to the 7-aminomethyl group of 7-deazaguanine (preQ1-tRNA) to give epoxyqueuosine (oQ-tRNA). This is S-adenosylmethionine:tRNA ribosyltransferase-isomerase from Psychrobacter arcticus (strain DSM 17307 / VKM B-2377 / 273-4).